The sequence spans 212 residues: Cyclin-dependent kinase inhibitor 3 (212 aa).

Residues 1-12 (MKPPSSIQTSEF) are compositionally biased toward polar residues. The tract at residues 1–23 (MKPPSSIQTSEFDSSDEEPIEDE) is disordered. The segment at 1–34 (MKPPSSIQTSEFDSSDEEPIEDEQTPIQISWLPL) is interaction with CDK2. Acidic residues predominate over residues 13 to 23 (DSSDEEPIEDE). Residues 32-201 (LPLSRVNYSQ…FRDKLAAHLS (170 aa)) form the Tyrosine-protein phosphatase domain. Catalysis depends on Cys140, which acts as the Phosphocysteine intermediate.

This sequence belongs to the protein-tyrosine phosphatase family. Interacts with cyclin-dependent kinases such as CDK1, CDK2 and CDK3. Does not interact with CDK4. Interacts (via C-terminus) with phosphorylated CDK2 (via C-terminal helix). Interacts with MS4A3 (via C-terminus); the interaction enhances CDKN3 enzymatic activity.

The protein resides in the cytoplasm. The protein localises to the perinuclear region. The catalysed reaction is O-phospho-L-tyrosyl-[protein] + H2O = L-tyrosyl-[protein] + phosphate. The enzyme catalyses O-phospho-L-seryl-[protein] + H2O = L-seryl-[protein] + phosphate. It carries out the reaction O-phospho-L-threonyl-[protein] + H2O = L-threonyl-[protein] + phosphate. In terms of biological role, may play a role in cell cycle regulation. Dual specificity phosphatase active toward substrates containing either phosphotyrosine or phosphoserine residues. Dephosphorylates CDK2 at 'Thr-160' in a cyclin-dependent manner. The sequence is that of Cyclin-dependent kinase inhibitor 3 from Sus scrofa (Pig).